The following is a 300-amino-acid chain: 4-hydroxy-tetrahydrodipicolinate synthase (300 aa).

Threonine 45 is a binding site for pyruvate. Residue tyrosine 140 is the Proton donor/acceptor of the active site. The active-site Schiff-base intermediate with substrate is the lysine 169. Isoleucine 210 contributes to the pyruvate binding site.

The protein belongs to the DapA family. As to quaternary structure, homotetramer; dimer of dimers.

The protein resides in the cytoplasm. The enzyme catalyses L-aspartate 4-semialdehyde + pyruvate = (2S,4S)-4-hydroxy-2,3,4,5-tetrahydrodipicolinate + H2O + H(+). Its pathway is amino-acid biosynthesis; L-lysine biosynthesis via DAP pathway; (S)-tetrahydrodipicolinate from L-aspartate: step 3/4. In terms of biological role, catalyzes the condensation of (S)-aspartate-beta-semialdehyde [(S)-ASA] and pyruvate to 4-hydroxy-tetrahydrodipicolinate (HTPA). In Helicobacter pylori (strain HPAG1), this protein is 4-hydroxy-tetrahydrodipicolinate synthase.